The sequence spans 172 residues: uncharacterized protein (172 aa).

4 helical membrane passes run M1–I21, N41–N61, Q72–L92, and F136–V156.

The protein resides in the cell membrane. This is an uncharacterized protein from Haemophilus influenzae (strain ATCC 51907 / DSM 11121 / KW20 / Rd).